Reading from the N-terminus, the 342-residue chain is Heparan sulfate glucosamine 3-O-sulfotransferase 6 (342 aa).

The Cytoplasmic segment spans residues 1-31 (MAGSGGLGGGAGDLQGAGTGQGTALRALRAP). The chain crosses the membrane as a helical; Signal-anchor for type II membrane protein span at residues 32 to 49 (LALVVLLLSAYCLFALPG). At 50–342 (RCPPAARAPA…QMTGQDFGWD (293 aa)) the chain is on the lumenal side. A disordered region spans residues 56-75 (RAPAPVPAPAEPPHTSLRLR). 100 to 104 (KGGTR) provides a ligand contact to 3'-phosphoadenylyl sulfate. Residues 122–128 (EPHFFDR) and 153–156 (KTPS) contribute to the substrate site. Residues arginine 181 and serine 189 each contribute to the 3'-phosphoadenylyl sulfate site. 220–221 (WS) lines the substrate pocket. Residue asparagine 281 is glycosylated (N-linked (GlcNAc...) asparagine). Cysteine 288 and cysteine 300 form a disulfide bridge. 305-309 (KGRPH) lines the 3'-phosphoadenylyl sulfate pocket.

The protein belongs to the sulfotransferase 1 family. As to expression, expressed in liver and kidney, followed by heart, brain, lung and testis.

The protein resides in the golgi apparatus membrane. It carries out the reaction alpha-D-glucosaminyl-[heparan sulfate](n) + 3'-phosphoadenylyl sulfate = 3-sulfo-alpha-D-glucosaminyl-[heparan sulfate](n) + adenosine 3',5'-bisphosphate + H(+). In terms of biological role, sulfotransferase that utilizes 3'-phospho-5'-adenylyl sulfate (PAPS) to catalyze the transfer of a sulfo group to heparan sulfate. Unlike 3-OST-1, does not convert non-anticoagulant heparan sulfate to anticoagulant heparan sulfate. This Mus musculus (Mouse) protein is Heparan sulfate glucosamine 3-O-sulfotransferase 6 (Hs3st6).